We begin with the raw amino-acid sequence, 478 residues long: 5-hydroxytryptamine receptor 3A (478 aa).

A signal peptide spans M1–A23. The Extracellular segment spans residues R24–R241. Residues N28, N104, N170, and N186 are each glycosylated (N-linked (GlcNAc...) asparagine). C157 and C171 form a disulfide bridge. A helical membrane pass occupies residues P242–P268. Residues N269–R273 are Cytoplasmic-facing. A helical membrane pass occupies residues V274 to S292. Topologically, residues D293–T302 are extracellular. The helical transmembrane segment at P303–A321 threads the bilayer. Residues E322–H455 lie on the Cytoplasmic side of the membrane. The interval G389–P408 is disordered. Residues D393 to C402 show a composition bias toward basic and acidic residues. Positions A414–D450 are HA-stretch; determines single-channel conductance in 5-HT3 receptors. Residues I456–W475 form a helical membrane-spanning segment. Residues Q476–A478 are Extracellular-facing.

This sequence belongs to the ligand-gated ion channel (TC 1.A.9) family. 5-hydroxytryptamine receptor (TC 1.A.9.2) subfamily. HTR3A sub-subfamily. Forms homopentameric as well as heteropentameric serotonin-activated cation-selective channel complexes with HTR3B or HTR3C or HTR3D or HTR3E. The homomeric complex is functional but exhibits low conductance with modified voltage dependence, and decreased agonist and antagonist affinity. Heteropentameric complexes display properties which resemble that of neuronal serotonin-activated channels in vivo. Interacts with RIC3. Expressed in cerebral cortex, amygdala, hippocampus, and testis. Detected in monocytes of the spleen and tonsil, in small and large intestine, uterus, prostate, ovary and placenta.

The protein localises to the postsynaptic cell membrane. The protein resides in the cell membrane. The catalysed reaction is Na(+)(in) = Na(+)(out). The enzyme catalyses K(+)(in) = K(+)(out). It carries out the reaction Ca(2+)(in) = Ca(2+)(out). It catalyses the reaction Mg(2+)(in) = Mg(2+)(out). Its function is as follows. Forms serotonin (5-hydroxytryptamine/5-HT3)-activated cation-selective channel complexes, which when activated cause fast, depolarizing responses in neurons. This chain is 5-hydroxytryptamine receptor 3A, found in Homo sapiens (Human).